The primary structure comprises 202 residues: Imidazoleglycerol-phosphate dehydratase (202 aa).

Belongs to the imidazoleglycerol-phosphate dehydratase family.

The protein localises to the cytoplasm. The enzyme catalyses D-erythro-1-(imidazol-4-yl)glycerol 3-phosphate = 3-(imidazol-4-yl)-2-oxopropyl phosphate + H2O. It participates in amino-acid biosynthesis; L-histidine biosynthesis; L-histidine from 5-phospho-alpha-D-ribose 1-diphosphate: step 6/9. In Corynebacterium efficiens (strain DSM 44549 / YS-314 / AJ 12310 / JCM 11189 / NBRC 100395), this protein is Imidazoleglycerol-phosphate dehydratase.